The chain runs to 381 residues: Arf-GAP with dual PH domain-containing protein 2 (381 aa).

The Arf-GAP domain maps to 9–132 (KRLLELLQAA…TAIDKAVSHP (124 aa)). The C4-type zinc finger occupies 25–48 (CADCGAADPDWASYKLGIFICLHC). PH domains follow at residues 132 to 233 (PGNR…AARL) and 255 to 361 (NYLK…GVLS).

The protein resides in the cytoplasm. It is found in the cell membrane. In terms of biological role, GTPase-activating protein for the ADP ribosylation factor family (Potential). Binds phosphatidylinositol 3,4,5-trisphosphate (PtdInsP3) and inositol 1,3,4,5-tetrakisphosphate (InsP4). Possesses a stoichiometry of two binding sites for InsP4 with identical affinity. The chain is Arf-GAP with dual PH domain-containing protein 2 (Adap2) from Mus musculus (Mouse).